Here is a 171-residue protein sequence, read N- to C-terminus: CS1 fimbrial subunit A (171 aa).

Residues 1-23 (MKLKKTIGAMALATLFATMGASA) form the signal peptide.

This sequence belongs to the fimbrial CS1 protein family.

The protein localises to the fimbrium. Functionally, fimbriae (also called pili), polar filaments radiating from the surface of the bacterium to a length of 0.5-1.5 micrometers and numbering 100-300 per cell, enable bacteria to colonize the epithelium of specific host organs. The sequence is that of CS1 fimbrial subunit A (csoA) from Escherichia coli.